A 520-amino-acid chain; its full sequence is Macrophage receptor MARCO (520 aa).

At 1–43 the chain is on the cytoplasmic side; that stretch reads MRNKKILKEDELLSETQQAAFHQIAMEPFEINVPKPKRRNGVN. A helical; Signal-anchor for type II membrane protein transmembrane segment spans residues 44–64; that stretch reads FSLAVVVIYLILLTAGAGLLV. Topologically, residues 65–520 are extracellular; that stretch reads VQVLNLQARL…EEDAGVECSV (456 aa). N-linked (GlcNAc...) asparagine glycosylation is found at Asn83 and Asn136. Positions 142–423 are disordered; it reads GMFRIKGEQG…KGERGENSVS (282 aa). The Collagen-like domain maps to 147–419; the sequence is KGEQGAPGLQ…VKGEKGERGE (273 aa). 3 stretches are compositionally biased toward low complexity: residues 203-227, 290-345, and 380-398; these read EAGL…PQGE, LAGF…PGAT, and SPGL…QKGD. The span at 410–419 shows a compositional bias: basic and acidic residues; sequence VKGEKGERGE. Positions 424 to 519 constitute an SRCR domain; it reads VRIVGSSNRG…HEEDAGVECS (96 aa). 3 cysteine pairs are disulfide-bonded: Cys447–Cys508, Cys460–Cys518, and Cys488–Cys498.

Homotrimer; disulfide-linked. Trimers may assemble in larger oligomers thus resulting in the creation of a large surface capable of interacting with very large ligands. Post-translationally, N-glycosylated. As to expression, expressed in alveolar macrophages (at protein level). Detected in macrophages from various tissues including thymus, kidney, Kupffer cells of liver, and spleen.

It is found in the cell membrane. Pattern recognition receptor (PRR) which binds Gram-positive and Gram-negative bacteria. Also plays a role in binding of unopsonized particles by alveolar macrophages. Binds to the secretoglobin SCGB3A2. The protein is Macrophage receptor MARCO (MARCO) of Homo sapiens (Human).